Consider the following 560-residue polypeptide: Membrane protein insertase YidC (560 aa).

A helical membrane pass occupies residues 1-21 (MDIKRTILIAALAVVSYVMVL). Positions 42-66 (VAPGLPDGVPAGNNGASADVPSANA) are disordered. The next 5 helical transmembrane spans lie at 341–361 (LELT…FWLL), 367–387 (LLGN…GLFF), 437–457 (LGGC…YWVL), 468–488 (WMLW…PIIM), and 515–535 (PIIF…YWVV).

This sequence belongs to the OXA1/ALB3/YidC family. Type 1 subfamily. In terms of assembly, interacts with the Sec translocase complex via SecD. Specifically interacts with transmembrane segments of nascent integral membrane proteins during membrane integration.

The protein resides in the cell inner membrane. Required for the insertion and/or proper folding and/or complex formation of integral membrane proteins into the membrane. Involved in integration of membrane proteins that insert both dependently and independently of the Sec translocase complex, as well as at least some lipoproteins. Aids folding of multispanning membrane proteins. The polypeptide is Membrane protein insertase YidC (Pseudomonas putida (strain GB-1)).